A 122-amino-acid chain; its full sequence is Large ribosomal subunit protein uL14 (122 aa).

It belongs to the universal ribosomal protein uL14 family. Part of the 50S ribosomal subunit. Forms a cluster with proteins L3 and L19. In the 70S ribosome, L14 and L19 interact and together make contacts with the 16S rRNA in bridges B5 and B8.

In terms of biological role, binds to 23S rRNA. Forms part of two intersubunit bridges in the 70S ribosome. The polypeptide is Large ribosomal subunit protein uL14 (Burkholderia vietnamiensis (strain G4 / LMG 22486) (Burkholderia cepacia (strain R1808))).